Reading from the N-terminus, the 243-residue chain is tRNA (guanine-N(1)-)-methyltransferase (243 aa).

S-adenosyl-L-methionine is bound by residues glycine 108 and leucine 127–leucine 132.

It belongs to the RNA methyltransferase TrmD family. As to quaternary structure, homodimer.

It is found in the cytoplasm. It carries out the reaction guanosine(37) in tRNA + S-adenosyl-L-methionine = N(1)-methylguanosine(37) in tRNA + S-adenosyl-L-homocysteine + H(+). Specifically methylates guanosine-37 in various tRNAs. The protein is tRNA (guanine-N(1)-)-methyltransferase of Streptococcus gordonii (strain Challis / ATCC 35105 / BCRC 15272 / CH1 / DL1 / V288).